A 95-amino-acid chain; its full sequence is Secretoglobin family 1C member 1 (95 aa).

A signal peptide spans 1 to 23 (MKGSSALLLVALSLLCVCGLTRA).

This sequence belongs to the secretoglobin family.

Its subcellular location is the secreted. This Mus musculus (Mouse) protein is Secretoglobin family 1C member 1 (Scgb1c1).